We begin with the raw amino-acid sequence, 930 residues long: Protein translocase subunit SecA (930 aa).

Residues Gln-87, 105–109 (GEGKT), and Asp-515 each bind ATP. The Zn(2+) site is built by Cys-914, Cys-916, Cys-925, and His-926.

This sequence belongs to the SecA family. As to quaternary structure, monomer and homodimer. Part of the essential Sec protein translocation apparatus which comprises SecA, SecYEG and auxiliary proteins SecDF-YajC and YidC. Requires Zn(2+) as cofactor.

It is found in the cell inner membrane. The protein resides in the cytoplasm. It catalyses the reaction ATP + H2O + cellular proteinSide 1 = ADP + phosphate + cellular proteinSide 2.. In terms of biological role, part of the Sec protein translocase complex. Interacts with the SecYEG preprotein conducting channel. Has a central role in coupling the hydrolysis of ATP to the transfer of proteins into and across the cell membrane, serving both as a receptor for the preprotein-SecB complex and as an ATP-driven molecular motor driving the stepwise translocation of polypeptide chains across the membrane. This Burkholderia thailandensis (strain ATCC 700388 / DSM 13276 / CCUG 48851 / CIP 106301 / E264) protein is Protein translocase subunit SecA.